Here is a 202-residue protein sequence, read N- to C-terminus: Imidazoleglycerol-phosphate dehydratase (202 aa).

Belongs to the imidazoleglycerol-phosphate dehydratase family.

The protein resides in the cytoplasm. It catalyses the reaction D-erythro-1-(imidazol-4-yl)glycerol 3-phosphate = 3-(imidazol-4-yl)-2-oxopropyl phosphate + H2O. Its pathway is amino-acid biosynthesis; L-histidine biosynthesis; L-histidine from 5-phospho-alpha-D-ribose 1-diphosphate: step 6/9. The sequence is that of Imidazoleglycerol-phosphate dehydratase from Salinibacter ruber (strain DSM 13855 / M31).